A 240-amino-acid chain; its full sequence is Uridylate kinase (240 aa).

Residue 13-16 (KASG) participates in ATP binding. The segment at 21–26 (GAQGFG) is involved in allosteric activation by GTP. Residue Gly55 coordinates UMP. ATP contacts are provided by Gly56 and Arg60. Residues Asp75 and 136–143 (TGNPFFTT) contribute to the UMP site. ATP contacts are provided by Thr163, Gln164, Tyr169, and Asp172.

Belongs to the UMP kinase family. As to quaternary structure, homohexamer.

Its subcellular location is the cytoplasm. It catalyses the reaction UMP + ATP = UDP + ADP. It functions in the pathway pyrimidine metabolism; CTP biosynthesis via de novo pathway; UDP from UMP (UMPK route): step 1/1. With respect to regulation, allosterically activated by GTP. Inhibited by UTP. Its function is as follows. Catalyzes the reversible phosphorylation of UMP to UDP. This Rhizobium etli (strain ATCC 51251 / DSM 11541 / JCM 21823 / NBRC 15573 / CFN 42) protein is Uridylate kinase.